The sequence spans 1156 residues: MNQNKHGIIGASNCGCASDDVAKYPLANNPYSSALNLNSCQNSSILNWINIIGDAAKEAVSIGTTIVSLITAPSLTGLISIVYDLIGKVLGGSSGQSISDLSICDLLSIIDLRVSQSVLNDGIADFNGSVLLYRNYLEALDSWNKNPNSASAEELRTRFRIADSEFDRILTRGSLTNGGSLARQNAQILLLPSFASAAFFHLLLLRDATRYGTNWGLYNATPFINYQSKLVELIELYTDYCVHWYNRGFNELRQRGTSATAWLEFHRYRREMTLMVLDIVASFSSLDITNYPIETDFQLSRVIYTDPIGFVHRSSLRGESWFSFVNRANFSDLENAIPNPRPSWFLNNMIISTGSLTLPVSPSTDRARVWYGSRDRISPANSQFITELISGQHTTATQTILGRNIFRVDSQACNLNDTTYGVNRAVFYHDASEGSQRSVYEGYIRTTGIDNPRVQNINTYLPGENSDIPTPEDYTHILSTTINLTGGLRQVASNRRSSLVMYGWTHKSLARNNTINPDRITQIPLTKVDTRGTGVSYVNDPGFIGGALLQRTDHGSLGVLRVQFPLHLRQQYRIRVRYASTTNIRLSVNGSFGTISQNLPSTMRLGEDLRYGSFAIREFNTSIRPTASPDQIRLTIEPSFIRQEVYVDRIEFIPVNPTREAKEDLEAAKKAVASLFTRTRDGLQVNVKDYQVDQAANLVSCLSDEQYGYDKKMLLEAVRAAKRLSRERNLLQDPDFNTINSTEENGWKASNGVTISEGGPFYKGRAIQLASARENYPTYIYQKVDASELKPYTRYRLDGFVKSSQDLEIDLIHHHKVHLVKNVPDNLVSDTYPDDSCSGINRCQEQQMVNAQLETEHHHPMDCCEAAQTHEFSSYIDTGDLNSSVDQGIWAIFKVRTTDGYATLGNLELVEVGPLSGESLEREQRDNTKWSAELGRKRAETDRVYQDAKQSINHLFVDYQDQQLNPEIGMADIMDAQNLVASISDVYSDAVLQIPGINYEIYTELSNRLQQASYLYTSRNAVQNGDFNNGLDSWNATAGASVQQDGNTHFLVLSHWDAQVSQQFRVQPNCKYVLRVTAEKVGGGDGYVTIRDDAHHTETLTFNACDYDINGTYVTDNTYLTKEVVFHPETQHMWVEVNETEGAFHIDSIEFVETEK.

The propeptide at 1 to 23 (MNQNKHGIIGASNCGCASDDVAK) is removed in mature form.

It belongs to the delta endotoxin family.

Promotes colloidosmotic lysis by binding to the midgut epithelial cells of insects. This protein is toxic to Galleria mellonella. This is Pesticidal crystal protein Cry9Aa (cry9Aa) from Bacillus thuringiensis subsp. galleriae.